The primary structure comprises 101 residues: MTTNNLVLAGTITRSRQFDSPAGIAHTVVMLEHKSQRYEAGMLRNVYCQIQVVLSGEHFNSVSKNLKAGVEIQVEGFINLQQSRNGQNRLVLHAENVELKT.

Residues 1–101 (MTTNNLVLAG…LHAENVELKT (101 aa)) form the SSB domain.

This sequence belongs to the PriB family. In terms of assembly, homodimer. Interacts with PriA and DnaT. Component of the replication restart primosome. Primosome assembly occurs via a 'hand-off' mechanism. PriA binds to replication forks, subsequently PriB then DnaT bind; DnaT then displaces ssDNA to generate the helicase loading substrate.

Involved in the restart of stalled replication forks, which reloads the replicative helicase on sites other than the origin of replication; the PriA-PriB pathway is the major replication restart pathway. During primosome assembly it facilitates complex formation between PriA and DnaT on DNA; stabilizes PriA on DNA. Stimulates the DNA unwinding activity of PriA helicase. The chain is Replication restart protein PriB from Shewanella halifaxensis (strain HAW-EB4).